Consider the following 472-residue polypeptide: Tubulin gamma chain (472 aa).

GTP is bound at residue 142-148; that stretch reads AGGTGSG.

The protein belongs to the tubulin family. In terms of assembly, component of the gamma-tubulin small complex (gamma-TuSC) composed of tubulin gamma chain, gamma-tubulin complex protein 2 (GCP2) and gamma-tubulin complex protein 3 (GCP3). Interacts with GCP2 and GCP3. Interacts with EB1.

The protein localises to the cytoplasm. It localises to the cytoskeleton. It is found in the flagellum axoneme. The protein resides in the flagellum basal body. Its subcellular location is the spindle. The protein localises to the microtubule organizing center. Its function is as follows. Tubulin is the major constituent of microtubules (Potential). The gamma chain is found at microtubule organizing centers (MTOC) such as the centrosome. Component of the gamma-tubulin small complex (gamma-TuSC) involved in microtubule nucleation for the formation of median bodies and in the biogenesis of flagella. Gamma-TuSC may be required for the correct positioning of EB1 within the trophozoites. In Giardia intestinalis (strain ATCC 50803 / WB clone C6) (Giardia lamblia), this protein is Tubulin gamma chain.